The sequence spans 231 residues: 5'-methylthioadenosine/S-adenosylhomocysteine nucleosidase (231 aa).

Glu13 (proton acceptor) is an active-site residue. Substrate contacts are provided by residues Gly79, Met154, and 175–176 (ME). Asp199 functions as the Proton donor in the catalytic mechanism.

The protein belongs to the PNP/UDP phosphorylase family. MtnN subfamily.

The catalysed reaction is S-adenosyl-L-homocysteine + H2O = S-(5-deoxy-D-ribos-5-yl)-L-homocysteine + adenine. It catalyses the reaction S-methyl-5'-thioadenosine + H2O = 5-(methylsulfanyl)-D-ribose + adenine. It carries out the reaction 5'-deoxyadenosine + H2O = 5-deoxy-D-ribose + adenine. It participates in amino-acid biosynthesis; L-methionine biosynthesis via salvage pathway; S-methyl-5-thio-alpha-D-ribose 1-phosphate from S-methyl-5'-thioadenosine (hydrolase route): step 1/2. Its function is as follows. Catalyzes the irreversible cleavage of the glycosidic bond in both 5'-methylthioadenosine (MTA) and S-adenosylhomocysteine (SAH/AdoHcy) to adenine and the corresponding thioribose, 5'-methylthioribose and S-ribosylhomocysteine, respectively. Also cleaves 5'-deoxyadenosine, a toxic by-product of radical S-adenosylmethionine (SAM) enzymes, into 5-deoxyribose and adenine. The chain is 5'-methylthioadenosine/S-adenosylhomocysteine nucleosidase from Marinomonas sp. (strain MWYL1).